A 126-amino-acid chain; its full sequence is Aspartate 1-decarboxylase (126 aa).

Serine 25 functions as the Schiff-base intermediate with substrate; via pyruvic acid in the catalytic mechanism. Serine 25 carries the pyruvic acid (Ser) modification. Substrate is bound at residue threonine 57. Tyrosine 58 functions as the Proton donor in the catalytic mechanism. 73–75 contributes to the substrate binding site; the sequence is GAA.

Belongs to the PanD family. As to quaternary structure, heterooctamer of four alpha and four beta subunits. Pyruvate is required as a cofactor. Is synthesized initially as an inactive proenzyme, which is activated by self-cleavage at a specific serine bond to produce a beta-subunit with a hydroxyl group at its C-terminus and an alpha-subunit with a pyruvoyl group at its N-terminus.

The protein resides in the cytoplasm. The enzyme catalyses L-aspartate + H(+) = beta-alanine + CO2. Its pathway is cofactor biosynthesis; (R)-pantothenate biosynthesis; beta-alanine from L-aspartate: step 1/1. Catalyzes the pyruvoyl-dependent decarboxylation of aspartate to produce beta-alanine. This chain is Aspartate 1-decarboxylase, found in Methylococcus capsulatus (strain ATCC 33009 / NCIMB 11132 / Bath).